The following is a 204-amino-acid chain: Fruiting body protein SC7 (204 aa).

The signal sequence occupies residues 1–16 (MKLTVILLTAVLAASA). The 124-residue stretch at 62 to 185 (LKAHNNERAQ…KTLWYYVCNY (124 aa)) folds into the SCP domain. N-linked (GlcNAc...) asparagine glycans are attached at residues asparagine 80, asparagine 118, and asparagine 134.

Belongs to the CRISP family.

It localises to the secreted. This Schizophyllum commune (Split gill fungus) protein is Fruiting body protein SC7 (SC7).